Here is a 798-residue protein sequence, read N- to C-terminus: Cold shock domain-containing protein E1 (798 aa).

A CSD 1 domain is found at 26 to 87; sequence ETGVIEKLLT…RTGKPIAIKL (62 aa). N6-acetyllysine is present on K81. K91 participates in a covalent cross-link: Glycyl lysine isopeptide (Lys-Gly) (interchain with G-Cter in SUMO2). At S123 the chain carries Phosphoserine. The CSD 2; truncated domain occupies 136–179; that stretch reads VFYLTYTSEDVEGNVQLETGDKINFVIDNNKHTGAVSARNIMLL. In terms of domain architecture, CSD 3 spans 186 to 245; it reads YQGVVCAMKEAFGFIERGDVVKEIFFHYSEFKGDLETLQPGDDVEFTIKDRNGKEVATDV. S276 is subject to Phosphoserine. A CSD 4; truncated domain is found at 297–337; the sequence is LPFGDKDTKSKVTLLEGDHVRFNISTDRRDKLERATNIEVL. CSD domains follow at residues 349-410 and 447-507; these read EMGV…AIRI and NKGK…ATCV. S514 is modified (phosphoserine). The region spanning 519–579 is the CSD 7 domain; that stretch reads LLGYVATLKD…KGNKVSAEKV (61 aa). Residue S584 is modified to Phosphoserine. CSD domains lie at 610-670 and 674-735; these read PTQI…AYNI and RRAT…ACNV. Positions 748-789 constitute an SUZ-C domain; the sequence is PRPDRLVNRLKNITLDDASAPRLMVLRQPRGPDNSMGFGAER. The residue at position 761 (T761) is a Phosphothreonine.

Belongs to the UNR family. In terms of assembly, component of a multi subunit autoregulatory ribonucleoprotein complex (ARC), at least composed of IGF2BP1, PABPC1 and CSDE1. Interacts with STRAP. Part of a complex associated with the FOS mCRD domain and consisting of PABPC1, PAIP1, HNRPD and SYNCRIP. The interaction with PABPC1 is direct and RNA-independent. Interacts with EIF4ENIF1/4E-T.

The protein localises to the cytoplasm. The protein resides in the stress granule. It localises to the P-body. Functionally, RNA-binding protein involved in translationally coupled mRNA turnover. Implicated with other RNA-binding proteins in the cytoplasmic deadenylation/translational and decay interplay of the FOS mRNA mediated by the major coding-region determinant of instability (mCRD) domain. Required for efficient formation of stress granules. The polypeptide is Cold shock domain-containing protein E1 (Rattus norvegicus (Rat)).